We begin with the raw amino-acid sequence, 1100 residues long: Regulator of nonsense transcripts 1 (1100 aa).

Low complexity predominate over residues 42 to 53 (SQTQTQGQTQSQ). The tract at residues 42 to 67 (SQTQTQGQTQSQLDNQVNGPDGVLPN) is disordered. Positions 94–251 (TKDLPVHACS…NKLEELWKEN (158 aa)) constitute a Upf1 CH-rich domain. Zn(2+) is bound by residues Cys-102, Cys-105, Cys-116, Ser-119, Cys-124, His-134, His-138, Cys-144, Cys-162, Cys-165, Cys-188, and Cys-192. The C3H stretch occupies residues 102-134 (CSYCGIHDPACVVYCNTSKKWFCNGRGNTSGSH). The tract at residues 116–144 (CNTSKKWFCNGRGNTSGSHIVNHLVRAKC) is CC/SHH/C. The C4 stretch occupies residues 162–192 (CYNCGCRNVFLLGFIPAKADSVVVLLCRQPC). ATP-binding positions include Gln-455, 475-479 (GTGKT), Gln-645, Tyr-682, and Glu-813. Residues 978-1065 (LGQVNGPAAG…QPELSQDSYL (88 aa)) form a disordered region. The span at 982–993 (NGPAAGRGAPKG) shows a compositional bias: low complexity. A compositionally biased stretch (polar residues) spans 1012–1063 (SGQPNMPNSQASQDLVSQPFSQGPLTQGYITMSQPSQMSQPGLSQPELSQDS).

The protein belongs to the DNA2/NAM7 helicase family.

Its subcellular location is the cytoplasm. It is found in the P-body. The protein localises to the nucleus. It localises to the perinuclear region. In terms of biological role, RNA-dependent helicase and ATPase required for nonsense-mediated decay (NMD) of mRNAs containing premature stop codons. Is recruited to mRNAs upon translation termination and undergoes a cycle of phosphorylation and dephosphorylation; its phosphorylation appears to be a key step in NMD. The formation of an upf1-upf2-upf3 surveillance complex is believed to activate NMD. This is Regulator of nonsense transcripts 1 from Danio rerio (Zebrafish).